The sequence spans 757 residues: Lysyl oxidase homolog 4 (757 aa).

Positions 1–25 (MMWPQPPTFSLFLLLLLSQAPSSRP) are cleaved as a signal peptide. 4 SRCR domains span residues 33–134 (LRLV…VVCH), 160–288 (VRLK…VSCV), 312–412 (VRLR…VRCN), and 422–530 (VRLA…VACM). Cystine bridges form between Cys59/Cys123, Cys72/Cys133, Cys103/Cys113, Cys192/Cys277, Cys205/Cys287, Cys252/Cys262, Cys337/Cys401, Cys350/Cys411, Cys381/Cys391, Cys451/Cys516, Cys464/Cys529, Cys498/Cys508, Cys559/Cys565, Cys611/Cys659, Cys643/Cys649, Cys671/Cys681, and Cys718/Cys732. A glycan (N-linked (GlcNAc...) asparagine) is linked at Asn199. The tract at residues 534 to 737 (PDLVMNAQLV…WLHNCHTGDS (204 aa)) is lysyl-oxidase like. Cu cation-binding residues include His612, His614, and His616. Residue Asn630 is glycosylated (N-linked (GlcNAc...) asparagine). The segment at residues 639-675 (KASFCLEDTNCPSGVQRRYACANFGEQGVAVGCWDTY) is a cross-link (lysine tyrosylquinone (Lys-Tyr)). Tyr675 carries the 2',4',5'-topaquinone modification.

This sequence belongs to the lysyl oxidase family. Requires Cu cation as cofactor. Lysine tyrosylquinone residue is required as a cofactor. In terms of processing, the lysine tyrosylquinone cross-link (LTQ) is generated by condensation of the epsilon-amino group of a lysine with a topaquinone produced by oxidation of tyrosine. Post-translationally, may be proteolytically cleaved by BMP1.

Its subcellular location is the secreted. It is found in the extracellular space. The catalysed reaction is L-lysyl-[protein] + O2 + H2O = (S)-2-amino-6-oxohexanoyl-[protein] + H2O2 + NH4(+). In terms of biological role, catalyzes the oxidative deamination of lysine and hydroxylysine residues in collagen and elastin, resulting in the formation of covalent cross-linkages, and the stabilization of collagen and elastin fibers. The sequence is that of Lysyl oxidase homolog 4 (Loxl4) from Mus musculus (Mouse).